Reading from the N-terminus, the 252-residue chain is MPVSRIAVGAPGELSHPDTAKAAVAEFISMLIFVFAGSGSGMAFSKLTDGGGTTPSGLIAASLAHALALFVAVAVGANISGGHVNPAVTFGAFVGGNISLVKAVVYWVAQLLGSVVACLLLKIATGGAAVGAFSLSAGVGAWNAVVFEIVMTFGLVYTVYATAVDPKKGDLGVIAPIAIGFIVGANILAGGAFDGASMNPAVSFGPAVVTGVWDNHWVYWLGPFVGAAIAALIYDIIFIGQRPHDQLPTADY.

The next 2 membrane-spanning stretches (helical) occupy residues valine 24–phenylalanine 44 and glycine 57–alanine 77. The short motif at asparagine 85–alanine 87 is the NPA 1 element. Transmembrane regions (helical) follow at residues valine 115–alanine 137, alanine 144–valine 164, and valine 173–phenylalanine 193. The short motif at asparagine 199 to alanine 201 is the NPA 2 element. The helical transmembrane segment at tryptophan 220–glycine 240 threads the bilayer.

This sequence belongs to the MIP/aquaporin (TC 1.A.8) family. TIP (TC 1.A.8.10) subfamily. As to expression, expressed in leaves.

It is found in the vacuole membrane. Aquaporins facilitate the transport of water and small neutral solutes across cell membranes. May be involved in transport from the vacuolar compartment to the cytoplasm. This Oryza sativa subsp. japonica (Rice) protein is Probable aquaporin TIP1-2 (TIP1-2).